The sequence spans 71 residues: Non-structural protein 3x (71 aa).

This is Non-structural protein 3x from Canis lupus familiaris (Dog).